We begin with the raw amino-acid sequence, 119 residues long: Immunoglobulin lambda variable 2-11 (119 aa).

The N-terminal stretch at 1–19 (MAWALLLLSLLTQGTGSWA) is a signal peptide. Residue Gln-20 is modified to Pyrrolidone carboxylic acid. The tract at residues 20 to 44 (QSALTQPRSVSGSPGQSVTISCTGT) is framework-1. Residues 20–119 (QSALTQPRSV…CSYAGSYTFH (100 aa)) enclose the Ig-like domain. A disulfide bond links Cys-41 and Cys-109. Residues 45–53 (SSDVGGYNY) form a complementarity-determining-1 region. The interval 54-70 (VSWYQQHPGKAPKLMIY) is framework-2. The tract at residues 71–73 (DVS) is complementarity-determining-2. Residues 74–109 (KRPSGVPDRFSGSKSGNTASLTISGLQAEDEADYYC) form a framework-3 region. The interval 110-119 (CSYAGSYTFH) is complementarity-determining-3.

In terms of assembly, immunoglobulins are composed of two identical heavy chains and two identical light chains; disulfide-linked.

Its subcellular location is the secreted. It is found in the cell membrane. In terms of biological role, v region of the variable domain of immunoglobulin light chains that participates in the antigen recognition. Immunoglobulins, also known as antibodies, are membrane-bound or secreted glycoproteins produced by B lymphocytes. In the recognition phase of humoral immunity, the membrane-bound immunoglobulins serve as receptors which, upon binding of a specific antigen, trigger the clonal expansion and differentiation of B lymphocytes into immunoglobulins-secreting plasma cells. Secreted immunoglobulins mediate the effector phase of humoral immunity, which results in the elimination of bound antigens. The antigen binding site is formed by the variable domain of one heavy chain, together with that of its associated light chain. Thus, each immunoglobulin has two antigen binding sites with remarkable affinity for a particular antigen. The variable domains are assembled by a process called V-(D)-J rearrangement and can then be subjected to somatic hypermutations which, after exposure to antigen and selection, allow affinity maturation for a particular antigen. The protein is Immunoglobulin lambda variable 2-11 of Homo sapiens (Human).